The sequence spans 250 residues: 3-deoxy-manno-octulosonate cytidylyltransferase (250 aa).

The protein belongs to the KdsB family.

The protein localises to the cytoplasm. It catalyses the reaction 3-deoxy-alpha-D-manno-oct-2-ulosonate + CTP = CMP-3-deoxy-beta-D-manno-octulosonate + diphosphate. It participates in nucleotide-sugar biosynthesis; CMP-3-deoxy-D-manno-octulosonate biosynthesis; CMP-3-deoxy-D-manno-octulosonate from 3-deoxy-D-manno-octulosonate and CTP: step 1/1. The protein operates within bacterial outer membrane biogenesis; lipopolysaccharide biosynthesis. Activates KDO (a required 8-carbon sugar) for incorporation into bacterial lipopolysaccharide in Gram-negative bacteria. The polypeptide is 3-deoxy-manno-octulosonate cytidylyltransferase (Legionella pneumophila subsp. pneumophila (strain Philadelphia 1 / ATCC 33152 / DSM 7513)).